The sequence spans 175 residues: Inosine/xanthosine triphosphatase (175 aa).

Residue 8 to 13 (TTNPAK) coordinates substrate. Aspartate 38 and glutamate 68 together coordinate Mg(2+). 68-69 (EA) provides a ligand contact to substrate.

This sequence belongs to the YjjX NTPase family. Homodimer. It depends on Mg(2+) as a cofactor. The cofactor is Mn(2+).

The enzyme catalyses XTP + H2O = XDP + phosphate + H(+). The catalysed reaction is ITP + H2O = IDP + phosphate + H(+). Phosphatase that hydrolyzes non-canonical purine nucleotides such as XTP and ITP to their respective diphosphate derivatives. Probably excludes non-canonical purines from DNA/RNA precursor pool, thus preventing their incorporation into DNA/RNA and avoiding chromosomal lesions. The protein is Inosine/xanthosine triphosphatase of Yersinia enterocolitica serotype O:8 / biotype 1B (strain NCTC 13174 / 8081).